A 342-amino-acid polypeptide reads, in one-letter code: MKVEDFDFDLPEELIAQTPLLDRTSSRLMVLDKKSGDIKDQHFTDIISYLNEGDALVLNDTRVLPARLHGIKDETGAHIEVLLLKQKEGNAWETLVKPAKRIRKGATITFGDGALKAICLEELEHGGRILEFSYEGIFYEVLEQLGEMPLPPYIKEQLADQDRYQTVYGKENGSAAAPTAGLHFTEDLLAKISAKGVEIIFVTLHVGLGTFRPVDVEDTTNHKMHSEFYRLTEESAERINKIKAQGGKVVAVGTTSIRTLETIASRHDGKLVAESGWTEIFISPGYTFQAVDALITNFHLPKSTLIMLVSALSDRTKILAAYNHAVEEQYRFFSFGDAMFIH.

This sequence belongs to the QueA family. Monomer.

The protein resides in the cytoplasm. The catalysed reaction is 7-aminomethyl-7-carbaguanosine(34) in tRNA + S-adenosyl-L-methionine = epoxyqueuosine(34) in tRNA + adenine + L-methionine + 2 H(+). Its pathway is tRNA modification; tRNA-queuosine biosynthesis. Transfers and isomerizes the ribose moiety from AdoMet to the 7-aminomethyl group of 7-deazaguanine (preQ1-tRNA) to give epoxyqueuosine (oQ-tRNA). In Listeria monocytogenes serotype 4b (strain F2365), this protein is S-adenosylmethionine:tRNA ribosyltransferase-isomerase.